Reading from the N-terminus, the 400-residue chain is 1-deoxy-D-xylulose 5-phosphate reductoisomerase (400 aa).

Residues threonine 10, glycine 11, serine 12, isoleucine 13, glycine 36, asparagine 38, and asparagine 124 each coordinate NADPH. Lysine 125 serves as a coordination point for 1-deoxy-D-xylulose 5-phosphate. Residue glutamate 126 participates in NADPH binding. Residue aspartate 150 coordinates Mn(2+). 4 residues coordinate 1-deoxy-D-xylulose 5-phosphate: serine 151, glutamate 152, serine 186, and histidine 209. Glutamate 152 lines the Mn(2+) pocket. Glycine 215 is a binding site for NADPH. 4 residues coordinate 1-deoxy-D-xylulose 5-phosphate: serine 222, asparagine 227, lysine 228, and glutamate 231. Residue glutamate 231 coordinates Mn(2+).

Belongs to the DXR family. Requires Mg(2+) as cofactor. The cofactor is Mn(2+).

The catalysed reaction is 2-C-methyl-D-erythritol 4-phosphate + NADP(+) = 1-deoxy-D-xylulose 5-phosphate + NADPH + H(+). It participates in isoprenoid biosynthesis; isopentenyl diphosphate biosynthesis via DXP pathway; isopentenyl diphosphate from 1-deoxy-D-xylulose 5-phosphate: step 1/6. Functionally, catalyzes the NADPH-dependent rearrangement and reduction of 1-deoxy-D-xylulose-5-phosphate (DXP) to 2-C-methyl-D-erythritol 4-phosphate (MEP). The sequence is that of 1-deoxy-D-xylulose 5-phosphate reductoisomerase from Aliivibrio salmonicida (strain LFI1238) (Vibrio salmonicida (strain LFI1238)).